Reading from the N-terminus, the 189-residue chain is Large ribosomal subunit protein bL9 (189 aa).

The protein belongs to the bacterial ribosomal protein bL9 family.

In terms of biological role, binds to the 23S rRNA. The protein is Large ribosomal subunit protein bL9 of Brucella anthropi (strain ATCC 49188 / DSM 6882 / CCUG 24695 / JCM 21032 / LMG 3331 / NBRC 15819 / NCTC 12168 / Alc 37) (Ochrobactrum anthropi).